Reading from the N-terminus, the 262-residue chain is Hydroxyethylthiazole kinase (262 aa).

Residue M50 coordinates substrate. Residues R125 and T171 each coordinate ATP. G198 provides a ligand contact to substrate.

Belongs to the Thz kinase family. The cofactor is Mg(2+).

The catalysed reaction is 5-(2-hydroxyethyl)-4-methylthiazole + ATP = 4-methyl-5-(2-phosphooxyethyl)-thiazole + ADP + H(+). The protein operates within cofactor biosynthesis; thiamine diphosphate biosynthesis; 4-methyl-5-(2-phosphoethyl)-thiazole from 5-(2-hydroxyethyl)-4-methylthiazole: step 1/1. Functionally, catalyzes the phosphorylation of the hydroxyl group of 4-methyl-5-beta-hydroxyethylthiazole (THZ). This is Hydroxyethylthiazole kinase from Escherichia coli O7:K1 (strain IAI39 / ExPEC).